Consider the following 127-residue polypeptide: uncharacterized protein (127 aa).

2 consecutive transmembrane segments (helical) span residues 13–35 and 57–81; these read ILLLISIFFLVCIISLVGIGIIF and AVLIVLGVFAICFMIIQLVISIMIW.

Its subcellular location is the cell membrane. This is an uncharacterized protein from Mycoplasma genitalium (strain ATCC 33530 / DSM 19775 / NCTC 10195 / G37) (Mycoplasmoides genitalium).